The chain runs to 331 residues: MALLCYNRGCGQRFDPEANADDACTYHPGVPVFHDALKGWSCCKRRTTDFSDFLSIVGCTKGRHNSEKPPEPVKPEVKTTEKKELSELKPKFQEHIIQAPKPVEAIKRPSPDEPMTNLELKISASLKQALDKLKLSSGNEEDKKEEDSDEIKIGTSCKNGGCSKTYQGLQSLEEVCVYHSGVPIFHEGMKYWSCCRRKTSDFNTFLAQEGCTRGKHVWTKKDAGKKVVPCRHDWHQTGGEVTISVYAKNSLPELSQVEANSTLLNVHIVFEGEKEFHQNVKLWGVIDVKRSYVTMTATKIEITMRKAEPMQWASLELPTTKKQEKQKDIAD.

A2 is subject to N-acetylalanine. The tract at residues 2–77 (ALLCYNRGCG…KPPEPVKPEV (76 aa)) is interaction with PPP5C. Residues C5, C10, C24, H27, C42, and C43 each contribute to the Zn(2+) site. 2 CHORD domains span residues 5 to 64 (CYNR…KGRH) and 157 to 216 (CKNG…RGKH). The residue at position 47 (T47) is a Phosphothreonine. At S51 the chain carries Phosphoserine. Residues C59, H64, C157, C162, C176, H179, C194, C195, C211, and H216 each coordinate Zn(2+). The disordered stretch occupies residues 62 to 82 (GRHNSEKPPEPVKPEVKTTEK). Residues 64-82 (HNSEKPPEPVKPEVKTTEK) are compositionally biased toward basic and acidic residues. The interval 65–316 (NSEKPPEPVK…AEPMQWASLE (252 aa)) is interaction with HSP90AA1 and HSP90AB1. The region spanning 227–316 (VVPCRHDWHQ…AEPMQWASLE (90 aa)) is the CS domain.

As to quaternary structure, interacts with HSP90AA1, HSP90AB1, PPP5C, ROCK1 and ROCK2.

Its function is as follows. Regulates centrosome duplication, probably by inhibiting the kinase activity of ROCK2. Proposed to act as co-chaperone for HSP90. May play a role in the regulation of NOD1 via a HSP90 chaperone complex. In vitro, has intrinsic chaperone activity. This function may be achieved by inhibiting association of ROCK2 with NPM1. Plays a role in ensuring the localization of the tyrosine kinase receptor EGFR to the plasma membrane, and thus ensures the subsequent regulation of EGFR activity and EGF-induced actin cytoskeleton remodeling. Involved in stress response. Prevents tumorigenesis. This Rattus norvegicus (Rat) protein is Cysteine and histidine-rich domain-containing protein 1 (Chordc1).